The sequence spans 278 residues: Indole-3-glycerol phosphate synthase (278 aa).

This sequence belongs to the TrpC family.

The enzyme catalyses 1-(2-carboxyphenylamino)-1-deoxy-D-ribulose 5-phosphate + H(+) = (1S,2R)-1-C-(indol-3-yl)glycerol 3-phosphate + CO2 + H2O. It participates in amino-acid biosynthesis; L-tryptophan biosynthesis; L-tryptophan from chorismate: step 4/5. The polypeptide is Indole-3-glycerol phosphate synthase (Pseudomonas aeruginosa (strain UCBPP-PA14)).